Here is a 446-residue protein sequence, read N- to C-terminus: 3-phosphoshikimate 1-carboxyvinyltransferase (446 aa).

3-phosphoshikimate contacts are provided by K35, S36, and R40. K35 contacts phosphoenolpyruvate. 2 residues coordinate phosphoenolpyruvate: G108 and R137. Positions 182, 184, 332, and 359 each coordinate 3-phosphoshikimate. Position 184 (Q184) interacts with phosphoenolpyruvate. Catalysis depends on D332, which acts as the Proton acceptor. R363 and R405 together coordinate phosphoenolpyruvate.

The protein belongs to the EPSP synthase family. In terms of assembly, monomer.

It localises to the cytoplasm. The catalysed reaction is 3-phosphoshikimate + phosphoenolpyruvate = 5-O-(1-carboxyvinyl)-3-phosphoshikimate + phosphate. It functions in the pathway metabolic intermediate biosynthesis; chorismate biosynthesis; chorismate from D-erythrose 4-phosphate and phosphoenolpyruvate: step 6/7. Its function is as follows. Catalyzes the transfer of the enolpyruvyl moiety of phosphoenolpyruvate (PEP) to the 5-hydroxyl of shikimate-3-phosphate (S3P) to produce enolpyruvyl shikimate-3-phosphate and inorganic phosphate. This Acaryochloris marina (strain MBIC 11017) protein is 3-phosphoshikimate 1-carboxyvinyltransferase.